The primary structure comprises 276 residues: Formamidopyrimidine-DNA glycosylase (276 aa).

P2 (schiff-base intermediate with DNA) is an active-site residue. The active-site Proton donor is the E3. Residue K58 is the Proton donor; for beta-elimination activity of the active site. Residues H92, R111, and K154 each contribute to the DNA site. An FPG-type zinc finger spans residues 239–273; the sequence is QVYGHVGEPCPVCGTKFEKIKVNGRGTTFCPHCQV. R263 acts as the Proton donor; for delta-elimination activity in catalysis.

It belongs to the FPG family. Monomer. It depends on Zn(2+) as a cofactor.

It catalyses the reaction Hydrolysis of DNA containing ring-opened 7-methylguanine residues, releasing 2,6-diamino-4-hydroxy-5-(N-methyl)formamidopyrimidine.. It carries out the reaction 2'-deoxyribonucleotide-(2'-deoxyribose 5'-phosphate)-2'-deoxyribonucleotide-DNA = a 3'-end 2'-deoxyribonucleotide-(2,3-dehydro-2,3-deoxyribose 5'-phosphate)-DNA + a 5'-end 5'-phospho-2'-deoxyribonucleoside-DNA + H(+). Its function is as follows. Involved in base excision repair of DNA damaged by oxidation or by mutagenic agents. Acts as a DNA glycosylase that recognizes and removes damaged bases. Has a preference for oxidized purines, such as 7,8-dihydro-8-oxoguanine (8-oxoG). Has AP (apurinic/apyrimidinic) lyase activity and introduces nicks in the DNA strand. Cleaves the DNA backbone by beta-delta elimination to generate a single-strand break at the site of the removed base with both 3'- and 5'-phosphates. This chain is Formamidopyrimidine-DNA glycosylase, found in Lactobacillus helveticus (strain DPC 4571).